A 174-amino-acid chain; its full sequence is Guided entry of tail-anchored proteins factor 1 (174 aa).

Topologically, residues 1–8 are lumenal; the sequence is MSASETDR. A helical membrane pass occupies residues 9 to 29; it reads WAWLLVLCFVFGCNVLRILLP. The Cytoplasmic segment spans residues 30–99; that stretch reads TLSSFISRVL…VKARTAQLAK (70 aa). Positions 39-94 form a coiled coil; the sequence is LQKDAEQESQMRAEIQSMKQELSTVNMMDEFARYARLERKINKMTDKLKTHVKART. Residues 39–97 form an interaction with GET3/TRC40 region; that stretch reads LQKDAEQESQMRAEIQSMKQELSTVNMMDEFARYARLERKINKMTDKLKTHVKARTAQL. The helical transmembrane segment at 100–120 threads the bilayer; that stretch reads IKWFISVAFYVLQAALMISLI. Residues 121–148 are Lumenal-facing; it reads WKYYSVPVAVVPSKWITPLDRLVAFPTR. Residues 149–169 form a helical membrane-spanning segment; the sequence is VAGGIGVTCWILVCNKVVAII. The Cytoplasmic portion of the chain corresponds to 170-174; it reads LHPFS.

It belongs to the WRB/GET1 family. Component of the Golgi to ER traffic (GET) complex, which is composed of GET1, CAMLG/GET2 and GET3. Within the complex, GET1 and CAMLG form a heterotetramer which is stabilized by phosphatidylinositol binding and which binds to the GET3 homodimer. Interacts with CAMLG/GET2 (via C-terminus). GET3 shows a higher affinity for CAMLG than for GET1.

The protein resides in the endoplasmic reticulum membrane. Required for the post-translational delivery of tail-anchored (TA) proteins to the endoplasmic reticulum. Together with CAMLG/GET2, acts as a membrane receptor for soluble GET3/TRC40, which recognizes and selectively binds the transmembrane domain of TA proteins in the cytosol. Required to ensure correct topology and ER insertion of CAMLG. The protein is Guided entry of tail-anchored proteins factor 1 of Rattus norvegicus (Rat).